Reading from the N-terminus, the 129-residue chain is Small ribosomal subunit protein uS9 (129 aa).

Belongs to the universal ribosomal protein uS9 family.

The polypeptide is Small ribosomal subunit protein uS9 (Chlorobium phaeobacteroides (strain DSM 266 / SMG 266 / 2430)).